The sequence spans 142 residues: Large ribosomal subunit protein uL13 (142 aa).

It belongs to the universal ribosomal protein uL13 family. As to quaternary structure, part of the 50S ribosomal subunit.

In terms of biological role, this protein is one of the early assembly proteins of the 50S ribosomal subunit, although it is not seen to bind rRNA by itself. It is important during the early stages of 50S assembly. The polypeptide is Large ribosomal subunit protein uL13 (Pseudomonas entomophila (strain L48)).